A 654-amino-acid chain; its full sequence is Protein LYK2 (654 aa).

The first 25 residues, 1–25 (MAVSVSKQYMTSLVVILLFISLSSL), serve as a signal peptide directing secretion. Over 26-241 (SPTSTSHSCD…PSKKKRSKMK (216 aa)) the chain is Extracellular. 3 disulfides stabilise this stretch: cysteine 50–cysteine 102, cysteine 57–cysteine 163, and cysteine 100–cysteine 161. N-linked (GlcNAc...) asparagine glycans are attached at residues asparagine 103, asparagine 170, asparagine 193, and asparagine 204. The LysM; degenerate repeat unit spans residues 177–217 (YPVGVRDSVSSLAVRFNTTEDAIVSANNKSGVVPLKPALIP). A disordered region spans residues 218–238 (LDHKPEKQGSRKRNPSKKKRS). The segment covering 227-238 (SRKRNPSKKKRS) has biased composition (basic residues). A helical membrane pass occupies residues 242–262 (LMIAVSSAIAGVCGLVTLMVF). Topologically, residues 263–654 (GYLHWKKETQ…PLVKKSSIID (392 aa)) are cytoplasmic. The region spanning 324 to 619 (TPRKPVLEIY…EIAERVSRLV (296 aa)) is the Protein kinase domain. ATP is bound by residues 330–338 (LEIYAFEEL) and lysine 368.

Belongs to the protein kinase superfamily. Ser/Thr protein kinase family.

Its subcellular location is the cell membrane. Functionally, may recognize microbe-derived N-acetylglucosamine (NAG)-containing ligands. The polypeptide is Protein LYK2 (LYK2) (Arabidopsis thaliana (Mouse-ear cress)).